An 88-amino-acid polypeptide reads, in one-letter code: U2-ctenitoxin-Pn1a (88 aa).

A signal peptide spans 1–17 (MKVAILILSILVLAVAS). Positions 18–34 (ETIEEYRDDFAVEELER) are excised as a propeptide. 5 cysteine pairs are disulfide-bonded: cysteine 37/cysteine 51, cysteine 44/cysteine 57, cysteine 48/cysteine 86, cysteine 50/cysteine 71, and cysteine 59/cysteine 69. A propeptide is located at residue lysine 88.

Expressed by the venom gland.

The protein localises to the secreted. Its function is as follows. Inhibits voltage-gated sodium channels (Nav). Causes scratching, lacrimation, hypersalivation, sweating and agitation followed by spastic paralysis of the anterior and posterior extremities and death at dose levels of 1.62 mg/mouse. Insecticidal to the larval and adult forms of the house fly. This Phoneutria nigriventer (Brazilian armed spider) protein is U2-ctenitoxin-Pn1a.